A 952-amino-acid polypeptide reads, in one-letter code: Pentatricopeptide repeat-containing protein At5g04810, chloroplastic (952 aa).

The N-terminal 60 residues, 1-60 (MDNGGSVLSLSAPHFPYSATILRRHSPVASISFSLKQPPPQPPEPPESPPDLRRPEKSIG), are a transit peptide targeting the chloroplast. Disordered stretches follow at residues 30 to 95 (SISF…VSPL) and 115 to 163 (LRLS…EFRQ). Residues 37–49 (QPPPQPPEPPESP) show a composition bias toward pro residues. Over residues 58–68 (SIGSSSSSSSP) the composition is skewed to low complexity. Positions 122-133 (SPPPPPPPPPPV) are enriched in pro residues. Over residues 137 to 163 (TQFRDEFRSDTKPPEEETRNPQQEFRQ) the composition is skewed to basic and acidic residues. Residues 167-238 (IFVGNLPTWI…VEFHGRILTV (72 aa)) enclose the RRM domain. Residues 259–280 (EGEEDTKMSNKSSWHQEREGSR) show a composition bias toward basic and acidic residues. The interval 259-281 (EGEEDTKMSNKSSWHQEREGSRK) is disordered. PPR repeat units follow at residues 308–342 (SRTEFGLMVKFYGRRGDMHRARETFERMRARGITP), 343–377 (TSRIYTSLIHAYAVGRDMDEALSCVRKMKEEGIEM), 378–412 (SLVTYSVIVGGFSKAGHAEAADYWFDEAKRIHKTL), 413–447 (NASIYGKIIYAHCQTCNMERAEALVREMEEEGIDA), 448–482 (PIAIYHTMMDGYTMVADEKKGLVVFKRLKECGFTP), 483–517 (TVVTYGCLINLYTKVGKISKALEVSRVMKEEGVKH), 518–552 (NLKTYSMMINGFVKLKDWANAFAVFEDMVKEGMKP), 553–587 (DVILYNNIISAFCGMGNMDRAIQTVKEMQKLRHRP), 588–622 (TTRTFMPIIHGYAKSGDMRRSLEVFDMMRRCGCVP), 623–657 (TVHTFNGLINGLVEKRQMEKAVEILDEMTLAGVSA), 658–692 (NEHTYTKIMQGYASVGDTGKAFEYFTRLQNEGLDV), 693–727 (DIFTYEALLKACCKSGRMQSALAVTKEMSARNIPR), 728–762 (NSFVYNILIDGWARRGDVWEAADLIQQMKKEGVKP), 763–797 (DIHTYTSFISACSKAGDMNRATQTIEEMEALGVKP), and 798–832 (NIKTYTTLIKGWARASLPEKALSCYEEMKAMGIKP). The tract at residues 918 to 952 (DQVSDVDSDEDDVDGEDGEDDEDVNSVSDLLSPYK) is disordered. Residues 921-941 (SDVDSDEDDVDGEDGEDDEDV) are compositionally biased toward acidic residues.

It belongs to the PPR family. P subfamily.

It localises to the plastid. It is found in the chloroplast. Functionally, may play a role in the plastid ribosome biogenesis. This chain is Pentatricopeptide repeat-containing protein At5g04810, chloroplastic (PPR4), found in Arabidopsis thaliana (Mouse-ear cress).